A 122-amino-acid chain; its full sequence is Large-conductance mechanosensitive channel (122 aa).

2 consecutive transmembrane segments (helical) span residues 14 to 34 (VLDL…VKSL) and 67 to 87 (GAFL…FILI).

This sequence belongs to the MscL family. As to quaternary structure, homopentamer.

The protein localises to the cell membrane. Channel that opens in response to stretch forces in the membrane lipid bilayer. May participate in the regulation of osmotic pressure changes within the cell. This is Large-conductance mechanosensitive channel from Lactococcus lactis subsp. lactis (strain IL1403) (Streptococcus lactis).